Reading from the N-terminus, the 411-residue chain is Phospholipase ABHD3 (411 aa).

Residues 25 to 45 (VGFFGSGVGLSLILGFSVAYA) form a helical; Signal-anchor for type II membrane protein membrane-spanning segment. The region spanning 140–233 (PTILLLPGLT…MLLLNYLGKI (94 aa)) is the AB hydrolase-1 domain. Catalysis depends on charge relay system residues serine 220, aspartate 346, and histidine 375.

Belongs to the AB hydrolase superfamily. AB hydrolase 4 family. Widely expressed with higher expression in liver.

It is found in the membrane. The catalysed reaction is a 1,2-diacyl-sn-glycero-3-phosphocholine + H2O = a 1-acyl-sn-glycero-3-phosphocholine + a fatty acid + H(+). It carries out the reaction a 1,2-diacyl-sn-glycero-3-phosphocholine + H2O = a 2-acyl-sn-glycero-3-phosphocholine + a fatty acid + H(+). The enzyme catalyses 1-tetradecanoyl-2-(9Z,12Z-octadecadienoyl)-sn-glycero-3-phosphocholine + H2O = 2-(9Z,12Z-octadecadienoyl)-sn-glycero-3-phosphocholine + tetradecanoate + H(+). It catalyses the reaction 1-tetradecanoyl-2-(9Z,12Z-octadecadienoyl)-sn-glycero-3-phosphocholine + H2O = 1-tetradecanoyl-sn-glycero-3-phosphocholine + (9Z,12Z)-octadecadienoate + H(+). The catalysed reaction is 1-tetradecanoyl-2-(5Z,8Z,11Z,14Z-eicosatetraenoyl)-sn-glycero-3-phosphocholine + H2O = 2-(5Z,8Z,11Z,14Z)-eicosatetraenoyl-sn-glycero-3-phosphocholine + tetradecanoate + H(+). It carries out the reaction 1-tetradecanoyl-2-(4Z,7Z,10Z,13Z,16Z,19Z-docosahexaenoyl)-sn-glycero-3-phosphocholine + H2O = 2-(4Z,7Z,10Z,13Z,16Z,19Z-docosahexaenoyl)-sn-glycero-3-phosphocholine + tetradecanoate + H(+). The enzyme catalyses 1,2-ditetradecanoyl-sn-glycero-3-phosphocholine + H2O = 2-tetradecanoyl-sn-glycero-3-phosphocholine + tetradecanoate + H(+). It catalyses the reaction 1-octadecanoyl-2-acetyl-sn-glycero-3-phosphocholine + H2O = 1-octadecanoyl-sn-glycero-3-phosphocholine + acetate + H(+). The catalysed reaction is 1,2-ditetradecanoyl-sn-glycero-3-phosphocholine + H2O = 1-tetradecanoyl-sn-glycero-3-phosphocholine + tetradecanoate + H(+). It carries out the reaction 1-octadecanoyl-2-pentanoyl-sn-glycero-3-phosphocholine + H2O = pentanoate + 1-octadecanoyl-sn-glycero-3-phosphocholine + H(+). The enzyme catalyses 1-octadecanoyl-2-hexanoyl-sn-glycero-3-phosphocholine + H2O = hexanoate + 1-octadecanoyl-sn-glycero-3-phosphocholine + H(+). It catalyses the reaction 1-octadecanoyl-2-octanoyl-sn-glycero-3-phosphocholine + H2O = 1-octadecanoyl-sn-glycero-3-phosphocholine + octanoate + H(+). The catalysed reaction is 1-octadecanoyl-2-nonanoyl-sn-glycero-3-phosphocholine + H2O = nonanoate + 1-octadecanoyl-sn-glycero-3-phosphocholine + H(+). It carries out the reaction 1-O-hexadecyl-2-nonadioyl-sn-glycero-3-phosphocholine + H2O = nonanedioate + 1-O-hexadecyl-sn-glycero-3-phosphocholine + H(+). The enzyme catalyses 1-hexadecanoyl-2-nonadioyl-sn-glycero-3-phosphocholine + H2O = nonanedioate + 1-hexadecanoyl-sn-glycero-3-phosphocholine + H(+). It catalyses the reaction 1-hexadecanoyl-2-(9-oxononanoyl)-sn-glycero-3-phosphocholine + H2O = 9-oxononanoate + 1-hexadecanoyl-sn-glycero-3-phosphocholine + H(+). The catalysed reaction is 1-hexadecanoyl-2-(5-oxopentanoyl)-sn-glycero-3-phosphocholine + H2O = 5-oxopentanoate + 1-hexadecanoyl-sn-glycero-3-phosphocholine + H(+). It carries out the reaction 1-hexadecanoyl-2-glutaroyl-sn-glycero-3-phosphocholine + H2O = glutarate + 1-hexadecanoyl-sn-glycero-3-phosphocholine + H(+). The enzyme catalyses 1-O-hexadecyl-2-acetyl-sn-glycero-3-phosphocholine + H2O = 1-O-hexadecyl-sn-glycero-3-phosphocholine + acetate + H(+). In terms of biological role, phospholipase that may play a role in phospholipids remodeling. May selectively cleave myristate (C14)-containing phosphatidylcholines through its predominant phospholipase 1 activity, cleaving preferentially acyl groups in sn1 position. In parallel, may have a minor phospholipase 2 activity acting on acyl groups in position sn2. In addition to (C14)-containing phosphatidylcholines, may also act on other medium-chain-containing and oxidatively truncated phospholipids. This is Phospholipase ABHD3 from Mus musculus (Mouse).